The following is a 600-amino-acid chain: Glutamine--fructose-6-phosphate aminotransferase [isomerizing] (600 aa).

The active-site Nucleophile; for GATase activity is Cys-2. In terms of domain architecture, Glutamine amidotransferase type-2 spans 2-217 (CGIVGYIGQN…DKEIVLVSRN (216 aa)). 2 consecutive SIS domains span residues 283 to 422 (IRTA…VKGL) and 452 to 590 (LARD…VDKP). Lys-595 acts as the For Fru-6P isomerization activity in catalysis.

Homodimer.

The protein resides in the cytoplasm. It catalyses the reaction D-fructose 6-phosphate + L-glutamine = D-glucosamine 6-phosphate + L-glutamate. Functionally, catalyzes the first step in hexosamine metabolism, converting fructose-6P into glucosamine-6P using glutamine as a nitrogen source. This chain is Glutamine--fructose-6-phosphate aminotransferase [isomerizing], found in Oceanobacillus iheyensis (strain DSM 14371 / CIP 107618 / JCM 11309 / KCTC 3954 / HTE831).